The following is a 108-amino-acid chain: DNA-directed RNA polymerase subunit omega (108 aa).

Residues 1-32 (MTNSQSDAALAAVPDRFDPSAGGPGAYDTPLG) form a disordered region.

This sequence belongs to the RNA polymerase subunit omega family. As to quaternary structure, the RNAP catalytic core consists of 2 alpha, 1 beta, 1 beta' and 1 omega subunit. When a sigma factor is associated with the core the holoenzyme is formed, which can initiate transcription.

The enzyme catalyses RNA(n) + a ribonucleoside 5'-triphosphate = RNA(n+1) + diphosphate. Its function is as follows. Promotes RNA polymerase assembly. Latches the N- and C-terminal regions of the beta' subunit thereby facilitating its interaction with the beta and alpha subunits. This Mycobacterium avium (strain 104) protein is DNA-directed RNA polymerase subunit omega.